A 420-amino-acid polypeptide reads, in one-letter code: L-rhamnose isomerase (420 aa).

Residues His-264, Asp-296, and Asp-298 each contribute to the Mn(2+) site.

Belongs to the rhamnose isomerase family. Mn(2+) serves as cofactor.

The protein localises to the cytoplasm. The enzyme catalyses L-rhamnopyranose = L-rhamnulose. It participates in carbohydrate degradation; L-rhamnose degradation; glycerone phosphate from L-rhamnose: step 1/3. Catalyzes the interconversion of L-rhamnose and L-rhamnulose. The chain is L-rhamnose isomerase from Listeria monocytogenes serotype 4b (strain CLIP80459).